The sequence spans 342 residues: Ketol-acid reductoisomerase (NADP(+)) (342 aa).

A KARI N-terminal Rossmann domain is found at 2–182; it reads AELFYDDDAD…GGLRAAGIKT (181 aa). NADP(+) contacts are provided by residues 25-28, arginine 48, serine 51, serine 53, and 83-86; these read YGSQ and DQHQ. The active site involves histidine 108. Residue glycine 134 participates in NADP(+) binding. A KARI C-terminal knotted domain is found at 183–328; that stretch reads TFTEETETDL…RELRKLFAWV (146 aa). Aspartate 191, glutamate 195, glutamate 227, and glutamate 231 together coordinate Mg(2+). Serine 252 contributes to the substrate binding site.

It belongs to the ketol-acid reductoisomerase family. The cofactor is Mg(2+).

It carries out the reaction (2R)-2,3-dihydroxy-3-methylbutanoate + NADP(+) = (2S)-2-acetolactate + NADPH + H(+). The catalysed reaction is (2R,3R)-2,3-dihydroxy-3-methylpentanoate + NADP(+) = (S)-2-ethyl-2-hydroxy-3-oxobutanoate + NADPH + H(+). The protein operates within amino-acid biosynthesis; L-isoleucine biosynthesis; L-isoleucine from 2-oxobutanoate: step 2/4. It participates in amino-acid biosynthesis; L-valine biosynthesis; L-valine from pyruvate: step 2/4. In terms of biological role, involved in the biosynthesis of branched-chain amino acids (BCAA). Catalyzes an alkyl-migration followed by a ketol-acid reduction of (S)-2-acetolactate (S2AL) to yield (R)-2,3-dihydroxy-isovalerate. In the isomerase reaction, S2AL is rearranged via a Mg-dependent methyl migration to produce 3-hydroxy-3-methyl-2-ketobutyrate (HMKB). In the reductase reaction, this 2-ketoacid undergoes a metal-dependent reduction by NADPH to yield (R)-2,3-dihydroxy-isovalerate. The polypeptide is Ketol-acid reductoisomerase (NADP(+)) (Beutenbergia cavernae (strain ATCC BAA-8 / DSM 12333 / CCUG 43141 / JCM 11478 / NBRC 16432 / NCIMB 13614 / HKI 0122)).